Reading from the N-terminus, the 169-residue chain is Required for excision 1-B domain-containing protein (169 aa).

The polypeptide is Required for excision 1-B domain-containing protein (Mus musculus (Mouse)).